The following is a 189-amino-acid chain: Accessory gene regulator protein B (189 aa).

5 helical membrane-spanning segments follow: residues I49–I69, S81–V100, I110–K130, Y143–F163, and A164–I184.

It belongs to the AgrB family.

It localises to the cell membrane. In terms of biological role, essential for the production of a quorum sensing system signal molecule, the autoinducing peptide (AIP). This quorum sensing system is responsible for the regulation of the expression of virulence factor genes. Involved in the proteolytic processing of AgrD, the precursor of AIP. The protein is Accessory gene regulator protein B of Staphylococcus aureus (strain COL).